Here is a 410-residue protein sequence, read N- to C-terminus: BRCA1-A complex subunit Abraxas 1 (410 aa).

An MPN domain is found at 7 to 160 (TAVLSGFVLG…HALYKPQKGL (154 aa)). Serine 48 bears the Phosphoserine mark. Positions 208-261 (SLKEVQKINEMYTSLQDELKSICEKVEHSERAVEKLLNDVNRLKGEIKKRKQAQ) form a coiled coil. The tract at residues 354–410 (DGWQFKKSRLGGIQNRPSKTDTNSSNQEQASTVSSPETDEEIERMKGSGEYPQSPTF) is disordered. The span at 368–389 (NRPSKTDTNSSNQEQASTVSSP) shows a compositional bias: polar residues. A phosphoserine mark is found at serine 387 and serine 388. Threonine 391 carries the post-translational modification Phosphothreonine. The residue at position 407 (serine 407) is a Phosphoserine. The pSXXF motif motif lies at 407–410 (SPTF).

This sequence belongs to the FAM175 family. Abraxas subfamily. In terms of assembly, component of the ARISC complex, at least composed of UIMC1/RAP80, ABRAXAS1, BRCC3/BRCC36, BABAM2 and BABAM1/NBA1. Component of the BRCA1-A complex, at least composed of the BRCA1, BARD1, UIMC1/RAP80, ABRAXAS1, BRCC3/BRCC36, BABAM2 and BABAM1/NBA1. In the complex, interacts directly with UIMC1/RAP80, BRCC3/BRCC36 and BABAM2. Homodimer. Interacts directly (when phosphorylated at Ser-407) with BRCA1. The phosphorylated homodimer can interact directly with two BRCA1 chains, giving rise to a heterotetramer. Binds polyubiquitin. Phosphorylation of Ser-407 of the pSXXF motif by ATM or ATR constitutes a specific recognition motif for the BRCT domain of BRCA1.

The protein localises to the nucleus. In terms of biological role, involved in DNA damage response and double-strand break (DSB) repair. Component of the BRCA1-A complex, acting as a central scaffold protein that assembles the various components of the complex and mediates the recruitment of BRCA1. The BRCA1-A complex specifically recognizes 'Lys-63'-linked ubiquitinated histones H2A and H2AX at DNA lesion sites, leading to target the BRCA1-BARD1 heterodimer to sites of DNA damage at DSBs. This complex also possesses deubiquitinase activity that specifically removes 'Lys-63'-linked ubiquitin on histones H2A and H2AX. In Bos taurus (Bovine), this protein is BRCA1-A complex subunit Abraxas 1.